A 603-amino-acid chain; its full sequence is Sulfite reductase [NADPH] flavoprotein alpha-component (603 aa).

The 139-residue stretch at 64–202 folds into the Flavodoxin-like domain; sequence ITLISASQTG…QAETWRAAIV (139 aa). Residues 70-75, 117-120, and 153-162 each bind FMN; these read SQTGNA, STQG, and LGDSSYEHFA. The region spanning 236 to 452 is the FAD-binding FR-type domain; the sequence is EAPLTAHLAL…IEHNDNFRLP (217 aa). FAD is bound by residues T326, L360, 390 to 393, 408 to 410, Y414, and 423 to 426; these read RLYS, TVG, and GGAS. NADP(+) contacts are provided by residues 523-524, 529-533, and D565; these read SR and KIYVQ. Position 603 (Y603) interacts with FAD.

The protein belongs to the NADPH-dependent sulphite reductase flavoprotein subunit CysJ family. This sequence in the N-terminal section; belongs to the flavodoxin family. It in the C-terminal section; belongs to the flavoprotein pyridine nucleotide cytochrome reductase family. In terms of assembly, alpha(8)-beta(8). The alpha component is a flavoprotein, the beta component is a hemoprotein. It depends on FAD as a cofactor. FMN serves as cofactor.

The enzyme catalyses hydrogen sulfide + 3 NADP(+) + 3 H2O = sulfite + 3 NADPH + 4 H(+). It functions in the pathway sulfur metabolism; hydrogen sulfide biosynthesis; hydrogen sulfide from sulfite (NADPH route): step 1/1. Functionally, component of the sulfite reductase complex that catalyzes the 6-electron reduction of sulfite to sulfide. This is one of several activities required for the biosynthesis of L-cysteine from sulfate. The flavoprotein component catalyzes the electron flow from NADPH -&gt; FAD -&gt; FMN to the hemoprotein component. This chain is Sulfite reductase [NADPH] flavoprotein alpha-component, found in Sodalis glossinidius (strain morsitans).